A 1176-amino-acid polypeptide reads, in one-letter code: Surface-layer 125 kDa protein (1176 aa).

Residues 1–30 (MAKQNKGRKFFAASATAALVASAIVPVASA) form the signal peptide. SLH domains lie at 31–88 (AQLN…LEAE), 89–152 (GDVN…DLSE), and 153–216 (FADA…PKVD).

The protein localises to the secreted. The protein resides in the cell wall. It is found in the S-layer. Functionally, the S-layer is a paracrystalline mono-layered assembly of proteins which coat the surface of bacteria. The chain is Surface-layer 125 kDa protein from Lysinibacillus sphaericus (Bacillus sphaericus).